The following is a 389-amino-acid chain: Chalcone synthase 9 (389 aa).

The active site involves Cys164.

It belongs to the thiolase-like superfamily. Chalcone/stilbene synthases family.

The enzyme catalyses (E)-4-coumaroyl-CoA + 3 malonyl-CoA + 3 H(+) = 2',4,4',6'-tetrahydroxychalcone + 3 CO2 + 4 CoA. It functions in the pathway secondary metabolite biosynthesis; flavonoid biosynthesis. In terms of biological role, the primary product of this enzyme is 4,2',4',6'-tetrahydroxychalcone (also termed naringenin-chalcone or chalcone) which can under specific conditions spontaneously isomerize into naringenin. The chain is Chalcone synthase 9 (CHS9) from Medicago sativa (Alfalfa).